Consider the following 155-residue polypeptide: Small ribosomal subunit protein uS7cz/uS7cy (155 aa).

Belongs to the universal ribosomal protein uS7 family. As to quaternary structure, part of the 30S ribosomal subunit.

It localises to the plastid. In terms of biological role, one of the primary rRNA binding proteins, it binds directly to 16S rRNA where it nucleates assembly of the head domain of the 30S subunit. The polypeptide is Small ribosomal subunit protein uS7cz/uS7cy (rps7-A) (Cuscuta exaltata (Tall dodder)).